We begin with the raw amino-acid sequence, 542 residues long: MARYVFITGGVVSSLGKGIAAAALGALLQARGYRVRLRKLDPYLNVDPGTMSPTQHGEVFVTDDGAETDLDLGHYERFTGRSATRTDNITTGRIYKNIIDKERRGDYLGATVQVIPHVTNEIKDFVTEGNQDYDFVICEIGGTVGDIEAMPFMEAIRQLGNDLPRGTAVYVHLTLMPYIPAAGELKTKPTQHSVKELQALGIHPDILLVRADREIPEAERRKLSLFCNVRPSAVIQALDVANIYDVPMAYHKEGLDDEVLAAFGIEPAPKPRLDQWEEVCNRIRTPEGEVTIAIVGKYTGLKDAYKSLIEALHHGGIANRVKVKLEWIESEVFEKEDPAPYLEKVHGILVPGGFGERGSEGKIHAARFARERKVPYFGICFGMQMAVIEAARNLADVPDASSTEFGPAKEPVVGLMTEWVKGNELQKRTAAGDLGGTMRLGAYKAALKKGTKISDIYGSTDISERHRHRYEVNIDYKDRLESCGLVFSGMSPDGVLPETIEYPDHPWFIGVQYHPELKSRPLDPHPLFASFIEAATEQSRLV.

An amidoligase domain region spans residues 1–265 (MARYVFITGG…DDEVLAAFGI (265 aa)). Serine 13 provides a ligand contact to CTP. Serine 13 contributes to the UTP binding site. Residues 14–19 (SLGKGI) and aspartate 71 each bind ATP. The Mg(2+) site is built by aspartate 71 and glutamate 139. Residues 146–148 (DIE), 186–191 (KTKPTQ), and lysine 222 contribute to the CTP site. Residues 186–191 (KTKPTQ) and lysine 222 each bind UTP. Residues 291 to 541 (TIAIVGKYTG…IEAATEQSRL (251 aa)) enclose the Glutamine amidotransferase type-1 domain. Glycine 353 contacts L-glutamine. The Nucleophile; for glutamine hydrolysis role is filled by cysteine 380. L-glutamine contacts are provided by residues 381-384 (FGMQ), glutamate 404, and arginine 469. Catalysis depends on residues histidine 514 and glutamate 516.

The protein belongs to the CTP synthase family. In terms of assembly, homotetramer.

The enzyme catalyses UTP + L-glutamine + ATP + H2O = CTP + L-glutamate + ADP + phosphate + 2 H(+). The catalysed reaction is L-glutamine + H2O = L-glutamate + NH4(+). It carries out the reaction UTP + NH4(+) + ATP = CTP + ADP + phosphate + 2 H(+). Its pathway is pyrimidine metabolism; CTP biosynthesis via de novo pathway; CTP from UDP: step 2/2. Allosterically activated by GTP, when glutamine is the substrate; GTP has no effect on the reaction when ammonia is the substrate. The allosteric effector GTP functions by stabilizing the protein conformation that binds the tetrahedral intermediate(s) formed during glutamine hydrolysis. Inhibited by the product CTP, via allosteric rather than competitive inhibition. In terms of biological role, catalyzes the ATP-dependent amination of UTP to CTP with either L-glutamine or ammonia as the source of nitrogen. Regulates intracellular CTP levels through interactions with the four ribonucleotide triphosphates. This chain is CTP synthase, found in Rhizobium etli (strain ATCC 51251 / DSM 11541 / JCM 21823 / NBRC 15573 / CFN 42).